The following is a 376-amino-acid chain: 26S proteasome non-ATPase regulatory subunit 13 (376 aa).

One can recognise a PCI domain in the interval 171–338 (SYYKDALRFL…KRVHMTWVQP (168 aa)). The residue at position 298 (Lys-298) is an N6-acetyllysine.

It belongs to the proteasome subunit S11 family. Component of the 19S proteasome regulatory particle complex. The 26S proteasome consists of a 20S core particle (CP) and two 19S regulatory subunits (RP). The regulatory particle is made of a lid composed of 9 subunits including PSMD13, a base containing 6 ATPases and few additional components.

In terms of biological role, component of the 26S proteasome, a multiprotein complex involved in the ATP-dependent degradation of ubiquitinated proteins. This complex plays a key role in the maintenance of protein homeostasis by removing misfolded or damaged proteins, which could impair cellular functions, and by removing proteins whose functions are no longer required. Therefore, the proteasome participates in numerous cellular processes, including cell cycle progression, apoptosis, or DNA damage repair. This Mus musculus (Mouse) protein is 26S proteasome non-ATPase regulatory subunit 13 (Psmd13).